Consider the following 504-residue polypeptide: Deoxyguanosinetriphosphate triphosphohydrolase (504 aa).

An HD domain is found at 66 to 273; it reads RLTHSMEVQQ…MEAADDISYC (208 aa).

This sequence belongs to the dGTPase family. Type 1 subfamily. In terms of assembly, homotetramer. Mg(2+) is required as a cofactor.

It catalyses the reaction dGTP + H2O = 2'-deoxyguanosine + triphosphate + H(+). Functionally, dGTPase preferentially hydrolyzes dGTP over the other canonical NTPs. This Enterobacter sp. (strain 638) protein is Deoxyguanosinetriphosphate triphosphohydrolase.